We begin with the raw amino-acid sequence, 147 residues long: NAD(P)H-quinone oxidoreductase subunit N (147 aa).

Belongs to the complex I NdhN subunit family. As to quaternary structure, NDH-1 can be composed of about 15 different subunits; different subcomplexes with different compositions have been identified which probably have different functions.

The protein localises to the cellular thylakoid membrane. It carries out the reaction a plastoquinone + NADH + (n+1) H(+)(in) = a plastoquinol + NAD(+) + n H(+)(out). It catalyses the reaction a plastoquinone + NADPH + (n+1) H(+)(in) = a plastoquinol + NADP(+) + n H(+)(out). In terms of biological role, NDH-1 shuttles electrons from an unknown electron donor, via FMN and iron-sulfur (Fe-S) centers, to quinones in the respiratory and/or the photosynthetic chain. The immediate electron acceptor for the enzyme in this species is believed to be plastoquinone. Couples the redox reaction to proton translocation, and thus conserves the redox energy in a proton gradient. Cyanobacterial NDH-1 also plays a role in inorganic carbon-concentration. This Synechococcus sp. (strain JA-2-3B'a(2-13)) (Cyanobacteria bacterium Yellowstone B-Prime) protein is NAD(P)H-quinone oxidoreductase subunit N.